Reading from the N-terminus, the 399-residue chain is Ribonuclease D (399 aa).

The 167-residue stretch at 31-197 (RVVTDNTALL…PLYHILEKEL (167 aa)) folds into the 3'-5' exonuclease domain. The HRDC domain occupies 239–318 (NPLELSRLRV…SQARRISSND (80 aa)).

The protein belongs to the RNase D family. A divalent metal cation serves as cofactor.

It localises to the cytoplasm. It carries out the reaction Exonucleolytic cleavage that removes extra residues from the 3'-terminus of tRNA to produce 5'-mononucleotides.. Exonuclease involved in the 3' processing of various precursor tRNAs. Initiates hydrolysis at the 3'-terminus of an RNA molecule and releases 5'-mononucleotides. The protein is Ribonuclease D of Haemophilus influenzae (strain ATCC 51907 / DSM 11121 / KW20 / Rd).